Here is a 325-residue protein sequence, read N- to C-terminus: GMP reductase (325 aa).

Residue Cys-174 is the Thioimidate intermediate of the active site. Position 203–226 (203–226 (IIADGGIRTHGDIAKSVRFGATMV)) interacts with NADP(+).

It belongs to the IMPDH/GMPR family. GuaC type 2 subfamily.

It catalyses the reaction IMP + NH4(+) + NADP(+) = GMP + NADPH + 2 H(+). Catalyzes the irreversible NADPH-dependent deamination of GMP to IMP. It functions in the conversion of nucleobase, nucleoside and nucleotide derivatives of G to A nucleotides, and in maintaining the intracellular balance of A and G nucleotides. The sequence is that of GMP reductase from Enterococcus faecalis (strain ATCC 700802 / V583).